A 194-amino-acid chain; its full sequence is Auxin-induced protein 22A (194 aa).

Positions 13–17 (LRLGL) match the EAR-like (transcriptional repression) motif. Residues 40-62 (EIDDVGDENSSSGGGGDRKMENK) form a disordered region. The PB1 domain occupies 85–173 (KMYVKVSMDG…KRLRIMKRAD (89 aa)).

It belongs to the Aux/IAA family. In terms of assembly, homodimers and heterodimers.

It is found in the nucleus. Its function is as follows. Aux/IAA proteins are short-lived transcriptional factors that function as repressors of early auxin response genes at low auxin concentrations. Repression is thought to result from the interaction with auxin response factors (ARFs), proteins that bind to the auxin-responsive promoter element (AuxRE). Formation of heterodimers with ARF proteins may alter their ability to modulate early auxin response genes expression. This chain is Auxin-induced protein 22A (AUX22A), found in Vigna radiata var. radiata (Mung bean).